The following is a 144-amino-acid chain: Heme transporter hrg1-B (144 aa).

Transmembrane regions (helical) follow at residues 6 to 26 (IYIS…AFIV), 38 to 58 (AMGG…IMYI), 71 to 91 (FFMF…ATFI), and 107 to 127 (FYLS…LGLY). The short motif at 140-141 (IL) is the Di-leucine motif element.

The protein belongs to the HRG family.

It is found in the endosome membrane. It localises to the lysosome membrane. The protein localises to the cytoplasmic vesicle. Its subcellular location is the phagosome membrane. The enzyme catalyses heme b(in) = heme b(out). Its function is as follows. Heme transporter that regulates intracellular heme availability through the endosomal or lysosomal compartment. In macrophages, is the heme transporter for heme-iron recycling. Essential for macrophage iron homeostasis, transports heme from the phagolysosome to the cytoplasm during erythrophagocytosis (EP). This Danio rerio (Zebrafish) protein is Heme transporter hrg1-B (slc48a1a).